A 420-amino-acid polypeptide reads, in one-letter code: Putative U-box domain-containing protein 58 (420 aa).

One can recognise an MIF4G domain in the interval 4-168 (NSYVLFARLC…EDALAMKKED (165 aa)). Positions 139–352 (SRVVELEGNY…TAKEQMEKRQ (214 aa)) form a coiled coil. The U-box domain occupies 352–420 (QPPSSFFCPI…ALRSAIEELV (69 aa)).

It carries out the reaction S-ubiquitinyl-[E2 ubiquitin-conjugating enzyme]-L-cysteine + [acceptor protein]-L-lysine = [E2 ubiquitin-conjugating enzyme]-L-cysteine + N(6)-ubiquitinyl-[acceptor protein]-L-lysine.. Its pathway is protein modification; protein ubiquitination. Its function is as follows. Functions as an E3 ubiquitin ligase. The sequence is that of Putative U-box domain-containing protein 58 (PUB58) from Arabidopsis thaliana (Mouse-ear cress).